We begin with the raw amino-acid sequence, 283 residues long: Elongation factor Ts (283 aa).

The involved in Mg(2+) ion dislocation from EF-Tu stretch occupies residues 80–83; the sequence is TDFV.

Belongs to the EF-Ts family.

The protein localises to the cytoplasm. Its function is as follows. Associates with the EF-Tu.GDP complex and induces the exchange of GDP to GTP. It remains bound to the aminoacyl-tRNA.EF-Tu.GTP complex up to the GTP hydrolysis stage on the ribosome. In Actinobacillus succinogenes (strain ATCC 55618 / DSM 22257 / CCUG 43843 / 130Z), this protein is Elongation factor Ts.